The primary structure comprises 421 residues: Medium-chain specific acyl-CoA dehydrogenase, mitochondrial (421 aa).

Residues 1–25 (MAAGFGRCCRVLRSISRFQWRSQHT) constitute a mitochondrion transit peptide. Lysine 69 is subject to N6-acetyllysine; alternate. Lysine 69 is modified (N6-succinyllysine; alternate). 158–167 (YCVTEPGAGS) lines the FAD pocket. Serine 167 serves as a coordination point for octanoyl-CoA. Residue lysine 179 is modified to N6-succinyllysine. 191 to 193 (WIT) is a binding site for FAD. An N6-acetyllysine; alternate mark is found at lysine 212, lysine 217, and lysine 271. N6-succinyllysine; alternate is present on residues lysine 212, lysine 217, and lysine 271. Residue aspartate 278 participates in octanoyl-CoA binding. Lysine 279 carries the post-translational modification N6-acetyllysine. Octanoyl-CoA is bound at residue arginine 281. Residue lysine 301 is modified to N6-acetyllysine. FAD-binding positions include 306–308 (RKT) and 316–317 (HQ). 2 residues coordinate octanoyl-CoA: arginine 349 and threonine 351. Phosphothreonine is present on threonine 351. Residue 374 to 378 (QILGG) participates in FAD binding. Glutamate 401 is an octanoyl-CoA binding site. The active-site Proton acceptor is glutamate 401. FAD is bound at residue 402–405 (GTSQ).

This sequence belongs to the acyl-CoA dehydrogenase family. As to quaternary structure, homotetramer. Interacts with the heterodimeric electron transfer flavoprotein ETF. FAD serves as cofactor. Acetylated. Could occur at proximity of the cofactor-binding sites and reduce the catalytic activity. Could be deacetylated by SIRT3.

It is found in the mitochondrion matrix. It catalyses the reaction a medium-chain 2,3-saturated fatty acyl-CoA + oxidized [electron-transfer flavoprotein] + H(+) = a medium-chain (2E)-enoyl-CoA + reduced [electron-transfer flavoprotein]. It carries out the reaction pentanoyl-CoA + oxidized [electron-transfer flavoprotein] + H(+) = (2E)-pentenoyl-CoA + reduced [electron-transfer flavoprotein]. The enzyme catalyses hexanoyl-CoA + oxidized [electron-transfer flavoprotein] + H(+) = (2E)-hexenoyl-CoA + reduced [electron-transfer flavoprotein]. The catalysed reaction is octanoyl-CoA + oxidized [electron-transfer flavoprotein] + H(+) = (2E)-octenoyl-CoA + reduced [electron-transfer flavoprotein]. It catalyses the reaction decanoyl-CoA + oxidized [electron-transfer flavoprotein] + H(+) = (2E)-decenoyl-CoA + reduced [electron-transfer flavoprotein]. It carries out the reaction dodecanoyl-CoA + oxidized [electron-transfer flavoprotein] + H(+) = (2E)-dodecenoyl-CoA + reduced [electron-transfer flavoprotein]. The enzyme catalyses tetradecanoyl-CoA + oxidized [electron-transfer flavoprotein] + H(+) = (2E)-tetradecenoyl-CoA + reduced [electron-transfer flavoprotein]. The catalysed reaction is oxidized [electron-transfer flavoprotein] + hexadecanoyl-CoA + H(+) = (2E)-hexadecenoyl-CoA + reduced [electron-transfer flavoprotein]. It participates in lipid metabolism; mitochondrial fatty acid beta-oxidation. Its function is as follows. Medium-chain specific acyl-CoA dehydrogenase is one of the acyl-CoA dehydrogenases that catalyze the first step of mitochondrial fatty acid beta-oxidation, an aerobic process breaking down fatty acids into acetyl-CoA and allowing the production of energy from fats. The first step of fatty acid beta-oxidation consists in the removal of one hydrogen from C-2 and C-3 of the straight-chain fatty acyl-CoA thioester, resulting in the formation of trans-2-enoyl-CoA. Electron transfer flavoprotein (ETF) is the electron acceptor that transfers electrons to the main mitochondrial respiratory chain via ETF-ubiquinone oxidoreductase (ETF dehydrogenase). Among the different mitochondrial acyl-CoA dehydrogenases, medium-chain specific acyl-CoA dehydrogenase acts specifically on acyl-CoAs with saturated 6 to 12 carbons long primary chains. The sequence is that of Medium-chain specific acyl-CoA dehydrogenase, mitochondrial from Pan troglodytes (Chimpanzee).